Here is a 302-residue protein sequence, read N- to C-terminus: Oxygen-dependent coproporphyrinogen-III oxidase (302 aa).

Position 94 (Ser94) interacts with substrate. 2 residues coordinate a divalent metal cation: His98 and His108. Catalysis depends on His108, which acts as the Proton donor. Position 110 to 112 (110 to 112) interacts with substrate; sequence NVR. A divalent metal cation contacts are provided by His147 and His177. The tract at residues 242 to 277 is important for dimerization; sequence YVEFNLVYDRGTIFGLQSGGRTESILMSLPPLVRWD. Residue 260 to 262 participates in substrate binding; it reads GGR.

It belongs to the aerobic coproporphyrinogen-III oxidase family. Homodimer. Requires a divalent metal cation as cofactor.

Its subcellular location is the cytoplasm. It carries out the reaction coproporphyrinogen III + O2 + 2 H(+) = protoporphyrinogen IX + 2 CO2 + 2 H2O. It participates in porphyrin-containing compound metabolism; protoporphyrin-IX biosynthesis; protoporphyrinogen-IX from coproporphyrinogen-III (O2 route): step 1/1. In terms of biological role, involved in the heme biosynthesis. Catalyzes the aerobic oxidative decarboxylation of propionate groups of rings A and B of coproporphyrinogen-III to yield the vinyl groups in protoporphyrinogen-IX. The chain is Oxygen-dependent coproporphyrinogen-III oxidase from Alcanivorax borkumensis (strain ATCC 700651 / DSM 11573 / NCIMB 13689 / SK2).